Reading from the N-terminus, the 292-residue chain is ATP phosphoribosyltransferase (292 aa).

The protein belongs to the ATP phosphoribosyltransferase family. Long subfamily. The cofactor is Mg(2+).

Its subcellular location is the cytoplasm. It catalyses the reaction 1-(5-phospho-beta-D-ribosyl)-ATP + diphosphate = 5-phospho-alpha-D-ribose 1-diphosphate + ATP. It participates in amino-acid biosynthesis; L-histidine biosynthesis; L-histidine from 5-phospho-alpha-D-ribose 1-diphosphate: step 1/9. Feedback inhibited by histidine. Catalyzes the condensation of ATP and 5-phosphoribose 1-diphosphate to form N'-(5'-phosphoribosyl)-ATP (PR-ATP). Has a crucial role in the pathway because the rate of histidine biosynthesis seems to be controlled primarily by regulation of HisG enzymatic activity. This chain is ATP phosphoribosyltransferase, found in Gemmatimonas aurantiaca (strain DSM 14586 / JCM 11422 / NBRC 100505 / T-27).